We begin with the raw amino-acid sequence, 273 residues long: Beta-lactamase OXA-133 (273 aa).

The N-terminal stretch at 1-17 (MNKYFTCYVVASLFFSG) is a signal peptide. A lipid anchor (N-palmitoyl cysteine) is attached at Cys18. Residue Cys18 is the site of S-diacylglycerol cysteine attachment. Catalysis depends on Ser79, which acts as the Acyl-ester intermediate. Residue Lys82 is modified to N6-carboxylysine. Residue 216–218 (KTG) coordinates substrate.

This sequence belongs to the class-D beta-lactamase family.

The protein localises to the cell membrane. It carries out the reaction a beta-lactam + H2O = a substituted beta-amino acid. In terms of biological role, catalyzes the hydrolysis of beta-lactam antibiotics. The chain is Beta-lactamase OXA-133 from Acinetobacter radioresistens.